Reading from the N-terminus, the 55-residue chain is Mitochondrial import receptor subunit TOM7 homolog (55 aa).

Residues 1 to 20 (MVKLSKEAKQRLQQLFKGSQ) are Cytoplasmic-facing. The chain crosses the membrane as a helical span at residues 21-36 (FAIRWGFIPLVIYLGF). At 37-55 (KRGADPGMPEPTVLSLLWG) the chain is on the mitochondrial intermembrane side.

This sequence belongs to the Tom7 family. In terms of assembly, forms part of the preprotein translocase complex of the outer mitochondrial membrane (TOM complex) which consists of at least 7 different proteins (TOMM5, TOMM6, TOMM7, TOMM20, TOMM22, TOMM40 and TOMM70).

It is found in the mitochondrion outer membrane. Functionally, required for assembly and stability of the TOM complex. Positive regulator of PRKN translocation to damaged mitochondria. Acts probably by stabilizing PINK1 on the outer membrane of depolarized mitochondria. The sequence is that of Mitochondrial import receptor subunit TOM7 homolog (TOMM7) from Homo sapiens (Human).